Consider the following 306-residue polypeptide: Curved DNA-binding protein (306 aa).

The 65-residue stretch at 5-69 (DYYAIMGVKP…QRRAEYDQMW (65 aa)) folds into the J domain.

Its subcellular location is the cytoplasm. It localises to the nucleoid. Functionally, DNA-binding protein that preferentially recognizes a curved DNA sequence. It is probably a functional analog of DnaJ; displays overlapping activities with DnaJ, but functions under different conditions, probably acting as a molecular chaperone in an adaptive response to environmental stresses other than heat shock. Lacks autonomous chaperone activity; binds native substrates and targets them for recognition by DnaK. Its activity is inhibited by the binding of CbpM. The protein is Curved DNA-binding protein of Shigella dysenteriae serotype 1 (strain Sd197).